Reading from the N-terminus, the 233-residue chain is Orotidine 5'-phosphate decarboxylase (233 aa).

Substrate contacts are provided by residues aspartate 11, lysine 34, 61 to 70 (DLKLHDIPNT), threonine 117, arginine 179, glutamine 188, glycine 208, and arginine 209. The Proton donor role is filled by lysine 63.

It belongs to the OMP decarboxylase family. Type 1 subfamily. In terms of assembly, homodimer.

The catalysed reaction is orotidine 5'-phosphate + H(+) = UMP + CO2. It participates in pyrimidine metabolism; UMP biosynthesis via de novo pathway; UMP from orotate: step 2/2. Catalyzes the decarboxylation of orotidine 5'-monophosphate (OMP) to uridine 5'-monophosphate (UMP). The chain is Orotidine 5'-phosphate decarboxylase from Streptococcus pneumoniae (strain CGSP14).